The sequence spans 560 residues: CTP synthase (560 aa).

Positions 1–272 (MSIGDVCSAR…DTQILSHFGM (272 aa)) are amidoligase domain. Ser-20 is a CTP binding site. UTP is bound at residue Ser-20. ATP contacts are provided by residues 21 to 26 (SLGKGL) and Asp-78. Mg(2+)-binding residues include Asp-78 and Glu-146. CTP-binding positions include 153 to 155 (DIE), 193 to 198 (KTKPTQ), and Lys-229. UTP contacts are provided by residues 193-198 (KTKPTQ) and Lys-229. Residues 297–539 (TIAIIGKYTK…VQNVLQIKQR (243 aa)) form the Glutamine amidotransferase type-1 domain. Gly-356 is an L-glutamine binding site. Catalysis depends on Cys-383, which acts as the Nucleophile; for glutamine hydrolysis. L-glutamine-binding positions include 384-387 (MGMQ), Glu-407, and Arg-467. Catalysis depends on residues His-512 and Glu-514.

The protein belongs to the CTP synthase family. Homotetramer.

It carries out the reaction UTP + L-glutamine + ATP + H2O = CTP + L-glutamate + ADP + phosphate + 2 H(+). It catalyses the reaction L-glutamine + H2O = L-glutamate + NH4(+). The catalysed reaction is UTP + NH4(+) + ATP = CTP + ADP + phosphate + 2 H(+). Its pathway is pyrimidine metabolism; CTP biosynthesis via de novo pathway; CTP from UDP: step 2/2. With respect to regulation, allosterically activated by GTP, when glutamine is the substrate; GTP has no effect on the reaction when ammonia is the substrate. The allosteric effector GTP functions by stabilizing the protein conformation that binds the tetrahedral intermediate(s) formed during glutamine hydrolysis. Inhibited by the product CTP, via allosteric rather than competitive inhibition. Its function is as follows. Catalyzes the ATP-dependent amination of UTP to CTP with either L-glutamine or ammonia as the source of nitrogen. Regulates intracellular CTP levels through interactions with the four ribonucleotide triphosphates. This chain is CTP synthase, found in Anaplasma marginale (strain Florida).